A 228-amino-acid chain; its full sequence is Cytidylate kinase (228 aa).

An ATP-binding site is contributed by 7–15 (GPVATGKST).

The protein belongs to the cytidylate kinase family. Type 1 subfamily.

Its subcellular location is the cytoplasm. It catalyses the reaction CMP + ATP = CDP + ADP. The enzyme catalyses dCMP + ATP = dCDP + ADP. The chain is Cytidylate kinase from Protochlamydia amoebophila (strain UWE25).